The sequence spans 486 residues: F-box protein At1g80960 (486 aa).

The 49-residue stretch at 49–97 folds into the F-box domain; that stretch reads VDWISKLPDDVLLIILSRLSTEEAIRTSVVSKRWEHVWNQMSHLVFDMR.

The chain is F-box protein At1g80960 from Arabidopsis thaliana (Mouse-ear cress).